Consider the following 57-residue polypeptide: Small ribosomal subunit protein bS21 (57 aa).

The disordered stretch occupies residues 35–57; it reads REFYEKPSVRRKKKSEAARKRKY. Positions 43-57 are enriched in basic residues; the sequence is VRRKKKSEAARKRKY.

This sequence belongs to the bacterial ribosomal protein bS21 family.

In Bacillus licheniformis (strain ATCC 14580 / DSM 13 / JCM 2505 / CCUG 7422 / NBRC 12200 / NCIMB 9375 / NCTC 10341 / NRRL NRS-1264 / Gibson 46), this protein is Small ribosomal subunit protein bS21.